Consider the following 427-residue polypeptide: Putative dipeptidase MCYG_02918 (427 aa).

Positions 1–29 (MAPERRSRLSDAGILVSLLALTSLVPVQA) are cleaved as a signal peptide. His55, Asp57, and Glu167 together coordinate Zn(2+). Residues Cys106 and Cys196 are joined by a disulfide bond. Substrate is bound at residue His194. Residues His238 and His259 each contribute to the Zn(2+) site. 2 residues coordinate substrate: Arg270 and Asp330. Residue Asn402 is glycosylated (N-linked (GlcNAc...) asparagine).

This sequence belongs to the metallo-dependent hydrolases superfamily. Peptidase M19 family. Zn(2+) serves as cofactor.

The enzyme catalyses an L-aminoacyl-L-amino acid + H2O = 2 an L-alpha-amino acid. Its function is as follows. Hydrolyzes a wide range of dipeptides. This is Putative dipeptidase MCYG_02918 from Arthroderma otae (strain ATCC MYA-4605 / CBS 113480) (Microsporum canis).